Reading from the N-terminus, the 213-residue chain is MPVHEIRHPLIRHKLGIMRRADLSTKSFRELSQEVAALLTYEATKDMPLAPASVEGWCGTVEVDKIAGKKVTVVPILRAGIGMLDGVLSLIPGAKVSVVGVARNEETLQAHTYLERLVGELDQRLALIVDPMLATGGSMVAAIDMLKRAGCREIRALTLVSAPEGIDAVLTAHPDVQIYTASIDQGLNENGYIMPGLGDAGDRIFGTTQKHAE.

Residues arginine 78, arginine 103, and aspartate 130–serine 138 contribute to the 5-phospho-alpha-D-ribose 1-diphosphate site. Uracil contacts are provided by residues isoleucine 193 and glycine 198–alanine 200. Aspartate 199 contacts 5-phospho-alpha-D-ribose 1-diphosphate.

This sequence belongs to the UPRTase family. Mg(2+) serves as cofactor.

It catalyses the reaction UMP + diphosphate = 5-phospho-alpha-D-ribose 1-diphosphate + uracil. It functions in the pathway pyrimidine metabolism; UMP biosynthesis via salvage pathway; UMP from uracil: step 1/1. Its activity is regulated as follows. Allosterically activated by GTP. In terms of biological role, catalyzes the conversion of uracil and 5-phospho-alpha-D-ribose 1-diphosphate (PRPP) to UMP and diphosphate. In Bordetella bronchiseptica (strain ATCC BAA-588 / NCTC 13252 / RB50) (Alcaligenes bronchisepticus), this protein is Uracil phosphoribosyltransferase.